Consider the following 708-residue polypeptide: C-Jun-amino-terminal kinase-interacting protein 1 (708 aa).

The segment at 1 to 26 (MAERESGLSGGAASPPAASPFLGLHI) is disordered. Positions 11–24 (GAASPPAASPFLGL) are enriched in low complexity. Ser14, Ser28, and Ser39 each carry phosphoserine. Residues 69-368 (PPRAGLLSAG…PPRASLSSDT (300 aa)) are disordered. The segment covering 71–87 (RAGLLSAGSSGSAGSRL) has biased composition (low complexity). Position 103 is a phosphothreonine; by MAPK8, MAPK9 and MAPK10 (Thr103). Residues 105–116 (GAEDDEEDDDEL) show a composition bias toward acidic residues. Residues 126–282 (SKAESGQEPA…EATEEIYLTP (157 aa)) form a JNK-binding domain (JBD) region. Phosphoserine is present on Ser149. Residues 154 to 173 (RPKRPTTLNLFPQVPRSQDT) form a minimal inhibitory domain (MID) region. Over residues 159–179 (TTLNLFPQVPRSQDTLNNNSL) the composition is skewed to polar residues. Phosphoserine is present on residues Ser178, Ser184, Ser190, Ser192, and Ser193. Positions 191–201 (RSSSPLKTGEQ) are enriched in polar residues. At Thr202 the chain carries Phosphothreonine; by MAPK8, MAPK9 and MAPK10. Ser211 carries the post-translational modification Phosphoserine. Residues 220 to 232 (PVPTQDRGTSTDS) show a composition bias toward polar residues. Residues 264-274 (IHYQADVRLEA) show a composition bias toward basic and acidic residues. The segment at 280-468 (LTPVQRPPDP…NVFMSGRSRS (189 aa)) is interaction with MAP3K7. A compositionally biased stretch (polar residues) spans 292-308 (PTSTFLPPTESRMSVSS). Ser308, Ser325, Ser327, Ser337, Ser352, Ser363, Ser366, Ser404, and Ser406 each carry phosphoserine. 2 short sequence motifs (D-box) span residues 350-357 (RGSLGEPP) and 361-369 (RASLSSDTS). The residue at position 408 (Thr408) is a Phosphothreonine. Residues 426 to 448 (EEYEEAPQPRPPTCLSEDSTPDE) are disordered. Ser441 and Ser444 each carry phosphoserine. At Thr445 the chain carries Phosphothreonine. Phosphoserine occurs at positions 466, 468, 469, and 470. The segment at 468 to 657 (SSSAESFGLF…PKNNKYFGFI (190 aa)) is interaction with VRK2. One can recognise an SH3 domain in the interval 485-546 (EHEQTHRAIF…PAYYAIEVTK (62 aa)). The PID domain occupies 558 to 697 (SDWIDQFRVK…FQQFYKQFVE (140 aa)).

Belongs to the JIP scaffold family. In terms of assembly, forms homo- or heterooligomeric complexes. Binds specific components of the JNK signaling pathway namely MAPK8/JNK1, MAPK9/JNK2, MAPK10/JNK3, MAP2K7/MKK7, MAP3K11/MLK3 and DLK1. Also binds the proline-rich domain-containing splice variant of apolipoprotein E receptor 2 (ApoER2). Interacts, via the PID domain, with ARHGEF28. Binds the cytoplasmic tails of LRP1 and LRP2 (Megalin). Binds the TPR motif-containing C-terminal of kinesin light chain, KLC1. Pre-assembled MAPK8IP1 scaffolding complexes are then transported as a cargo of kinesin, to the required subcellular location. Interacts with the cytoplasmic domain of APP. Interacts with DCLK2, VRK2 and MAP3K7/TAK1. Found in a complex with SH3RF1, RAC1, MAP3K11/MLK3, MAP2K7/MKK7 and MAPK8/JNK1. Found in a complex with SH3RF1, RAC2, MAP3K7/TAK1, MAP2K7/MKK7, MAPK8/JNK1 and MAPK9/JNK2. Interacts with SH3RF2. Post-translationally, phosphorylated by MAPK8, MAPK9 and MAPK10. Phosphorylation on Thr-103 is also necessary for the dissociation and activation of MAP3K12. Phosphorylated by VRK2. Hyperphosphorylated during mitosis following activation of stress-activated and MAP kinases. In terms of processing, ubiquitinated. Two preliminary events are required to prime for ubiquitination; phosphorylation and an increased in intracellular calcium concentration. Then, the calcium influx initiates ubiquitination and degradation by the ubiquitin-proteasome pathway. As to expression, highly expressed in brain and pancreatic beta-cells. Weaker expression found in kidney.

Its subcellular location is the cytoplasm. The protein resides in the perinuclear region. It localises to the nucleus. The protein localises to the endoplasmic reticulum membrane. It is found in the mitochondrion membrane. The JNK-interacting protein (JIP) group of scaffold proteins selectively mediates JNK signaling by aggregating specific components of the MAPK cascade to form a functional JNK signaling module. Required for JNK activation in response to excitotoxic stress. Cytoplasmic MAPK8IP1 causes inhibition of JNK-regulated activity by retaining JNK in the cytoplasm and thus inhibiting the JNK phosphorylation of c-Jun. May also participate in ApoER2-specific reelin signaling. Directly, or indirectly, regulates GLUT2 gene expression and beta-cell function. Appears to have a role in cell signaling in mature and developing nerve terminals. May function as a regulator of vesicle transport, through interactions with the JNK-signaling components and motor proteins. Functions as an anti-apoptotic protein and whose level seems to influence the beta-cell death or survival response. Acts as a scaffold protein that coordinates with SH3RF1 in organizing different components of the JNK pathway, including RAC1 or RAC2, MAP3K11/MLK3 or MAP3K7/TAK1, MAP2K7/MKK7, MAPK8/JNK1 and/or MAPK9/JNK2 into a functional multiprotein complex to ensure the effective activation of the JNK signaling pathway. Regulates the activation of MAPK8/JNK1 and differentiation of CD8(+) T-cells. This Rattus norvegicus (Rat) protein is C-Jun-amino-terminal kinase-interacting protein 1 (Mapk8ip1).